The chain runs to 456 residues: Chaperone protein dnaJ GFA2, mitochondrial (456 aa).

Residues 1–89 constitute a mitochondrion transit peptide; the sequence is MVPSNGAKVL…RSFHGTGSSF (89 aa). The 66-residue stretch at 94 to 159 folds into the J domain; the sequence is DYYSVLGVSK…EKRDLYDQVG (66 aa). Residues 225-303 form a CR-type zinc finger; it reads GCSKTVTFQT…CRGARVVRGQ (79 aa). Positions 238, 241, 255, 258, 277, 280, 291, and 294 each coordinate Zn(2+). 4 CXXCXGXG motif repeats span residues 238–245, 255–262, 277–284, and 291–298; these read CNTCGGQG, CKACNGSG, CQKCGGAG, and CKSCRGAR.

Belongs to the DnaJ family. As to expression, widely expressed.

The protein localises to the mitochondrion. In terms of biological role, chaperone that may play a role in mitochondrial protein folding. Involved in female gametophyte development. Required for cell death of the synergid cells during fertilization process, and fusion of the polar nuclei during megagametogenesis. The chain is Chaperone protein dnaJ GFA2, mitochondrial from Arabidopsis thaliana (Mouse-ear cress).